The primary structure comprises 70 residues: Cytochrome c oxidase subunit 8B, mitochondrial (70 aa).

The transit peptide at 1–24 (MSRLAPPLRLLQAPLKCWAVPKAH) directs the protein to the mitochondrion. At 25-35 (VSAKPARTPTS) the chain is on the mitochondrial matrix side. The chain crosses the membrane as a helical span at residues 36–59 (PMEQAVGLSVMFVSFLVPSGWVLS). The Mitochondrial intermembrane portion of the chain corresponds to 60-70 (HLESYKKSSTT).

The protein belongs to the cytochrome c oxidase VIII family. As to quaternary structure, component of the cytochrome c oxidase (complex IV, CIV), a multisubunit enzyme composed of 14 subunits. The complex is composed of a catalytic core of 3 subunits MT-CO1, MT-CO2 and MT-CO3, encoded in the mitochondrial DNA, and 11 supernumerary subunits COX4I, COX5A, COX5B, COX6A, COX6B, COX6C, COX7A, COX7B, COX7C, COX8 and NDUFA4, which are encoded in the nuclear genome. The complex exists as a monomer or a dimer and forms supercomplexes (SCs) in the inner mitochondrial membrane with NADH-ubiquinone oxidoreductase (complex I, CI) and ubiquinol-cytochrome c oxidoreductase (cytochrome b-c1 complex, complex III, CIII), resulting in different assemblies (supercomplex SCI(1)III(2)IV(1) and megacomplex MCI(2)III(2)IV(2)).

Its subcellular location is the mitochondrion inner membrane. Its pathway is energy metabolism; oxidative phosphorylation. Its function is as follows. Component of the cytochrome c oxidase, the last enzyme in the mitochondrial electron transport chain which drives oxidative phosphorylation. The respiratory chain contains 3 multisubunit complexes succinate dehydrogenase (complex II, CII), ubiquinol-cytochrome c oxidoreductase (cytochrome b-c1 complex, complex III, CIII) and cytochrome c oxidase (complex IV, CIV), that cooperate to transfer electrons derived from NADH and succinate to molecular oxygen, creating an electrochemical gradient over the inner membrane that drives transmembrane transport and the ATP synthase. Cytochrome c oxidase is the component of the respiratory chain that catalyzes the reduction of oxygen to water. Electrons originating from reduced cytochrome c in the intermembrane space (IMS) are transferred via the dinuclear copper A center (CU(A)) of subunit 2 and heme A of subunit 1 to the active site in subunit 1, a binuclear center (BNC) formed by heme A3 and copper B (CU(B)). The BNC reduces molecular oxygen to 2 water molecules using 4 electrons from cytochrome c in the IMS and 4 protons from the mitochondrial matrix. The polypeptide is Cytochrome c oxidase subunit 8B, mitochondrial (COX8B) (Carlito syrichta (Philippine tarsier)).